The primary structure comprises 233 residues: MNKPIIALDFQTYEEVEQFLAKFSGEALSVKVGMELFYSNGPIIVEKIKQQNHEIFLDLKLHDIPNTVKSAMVGLAKLGVDMVNVHAAGGKNMMEAALEGLEIGSGSGKRPKIIAVTQLTSTSEASMQSEQLIKTSLLESVLHYSALTNQAGLNGVVCSALEAEAIKQQNGADFLRVTPGIRLASDAADDQIRVVTPEKARLIGSTDIVVGRSITRANDPVAAYNQVLKEWNV.

Substrate-binding positions include Asp9, Lys31, Asp58–Thr67, Thr120, Arg182, Gln191, Gly211, and Arg212. Lys60 functions as the Proton donor in the catalytic mechanism.

It belongs to the OMP decarboxylase family. Type 1 subfamily. In terms of assembly, homodimer.

The enzyme catalyses orotidine 5'-phosphate + H(+) = UMP + CO2. The protein operates within pyrimidine metabolism; UMP biosynthesis via de novo pathway; UMP from orotate: step 2/2. Its function is as follows. Catalyzes the decarboxylation of orotidine 5'-monophosphate (OMP) to uridine 5'-monophosphate (UMP). The protein is Orotidine 5'-phosphate decarboxylase of Listeria monocytogenes serotype 4a (strain HCC23).